A 124-amino-acid chain; its full sequence is Large ribosomal subunit protein bL12 (124 aa).

The protein belongs to the bacterial ribosomal protein bL12 family. As to quaternary structure, homodimer. Part of the ribosomal stalk of the 50S ribosomal subunit. Forms a multimeric L10(L12)X complex, where L10 forms an elongated spine to which 2 to 4 L12 dimers bind in a sequential fashion. Binds GTP-bound translation factors.

Functionally, forms part of the ribosomal stalk which helps the ribosome interact with GTP-bound translation factors. Is thus essential for accurate translation. This chain is Large ribosomal subunit protein bL12, found in Herminiimonas arsenicoxydans.